A 578-amino-acid polypeptide reads, in one-letter code: Membrane protein insertase YidC (578 aa).

Residues 3–23 (IQRSILIVALAVVSYLLVLQW) traverse the membrane as a helical segment. The interval 34-72 (AASASMNTTQGLPDTPSASGTSSDVPTAQSSAAGSEAAD) is disordered. Polar residues predominate over residues 37–66 (ASMNTTQGLPDTPSASGTSSDVPTAQSSAA). 5 consecutive transmembrane segments (helical) span residues 361 to 381 (LELT…FWLL), 387 to 407 (LIGN…LAFF), 457 to 477 (LGGC…YWVL), 500 to 520 (PFFI…MLNP), and 535 to 555 (PIIF…YWVV).

This sequence belongs to the OXA1/ALB3/YidC family. Type 1 subfamily. In terms of assembly, interacts with the Sec translocase complex via SecD. Specifically interacts with transmembrane segments of nascent integral membrane proteins during membrane integration.

It localises to the cell inner membrane. In terms of biological role, required for the insertion and/or proper folding and/or complex formation of integral membrane proteins into the membrane. Involved in integration of membrane proteins that insert both dependently and independently of the Sec translocase complex, as well as at least some lipoproteins. Aids folding of multispanning membrane proteins. The protein is Membrane protein insertase YidC of Pseudomonas aeruginosa (strain LESB58).